Reading from the N-terminus, the 473-residue chain is Bifunctional protein HldE (473 aa).

Residues 1-317 (MKLSMPRFDQ…RRAVQREQGS (317 aa)) are ribokinase. 194 to 197 (NLSE) contributes to the ATP binding site. Aspartate 263 is an active-site residue. Residues 343–473 (FTNGCFDILH…TAIVEKIRQR (131 aa)) are cytidylyltransferase.

It in the N-terminal section; belongs to the carbohydrate kinase PfkB family. The protein in the C-terminal section; belongs to the cytidylyltransferase family. In terms of assembly, homodimer.

The catalysed reaction is D-glycero-beta-D-manno-heptose 7-phosphate + ATP = D-glycero-beta-D-manno-heptose 1,7-bisphosphate + ADP + H(+). It carries out the reaction D-glycero-beta-D-manno-heptose 1-phosphate + ATP + H(+) = ADP-D-glycero-beta-D-manno-heptose + diphosphate. It functions in the pathway nucleotide-sugar biosynthesis; ADP-L-glycero-beta-D-manno-heptose biosynthesis; ADP-L-glycero-beta-D-manno-heptose from D-glycero-beta-D-manno-heptose 7-phosphate: step 1/4. Its pathway is nucleotide-sugar biosynthesis; ADP-L-glycero-beta-D-manno-heptose biosynthesis; ADP-L-glycero-beta-D-manno-heptose from D-glycero-beta-D-manno-heptose 7-phosphate: step 3/4. Catalyzes the phosphorylation of D-glycero-D-manno-heptose 7-phosphate at the C-1 position to selectively form D-glycero-beta-D-manno-heptose-1,7-bisphosphate. Functionally, catalyzes the ADP transfer from ATP to D-glycero-beta-D-manno-heptose 1-phosphate, yielding ADP-D-glycero-beta-D-manno-heptose. This is Bifunctional protein HldE from Pseudomonas aeruginosa (strain LESB58).